A 1033-amino-acid chain; its full sequence is Putative U-box domain-containing protein 42 (1033 aa).

Residues 145–226 form a disordered region; the sequence is SQSQMTDIPD…SSNASSQRKY (82 aa). Polar residues predominate over residues 200 to 226; sequence LSKSQSQSTEIPDIPSQSSNASSQRKY. Positions 245 to 322 constitute a U-box domain; the sequence is PPYQAFICPL…QEWKVRNEAA (78 aa). 5 ARM repeats span residues 483–522, 523–562, 564–608, 610–659, and 665–704; these read PENI…EIDI, GHEK…HISL, HPNN…NILE, GLEH…SLSK, and ATIV…ALTP.

It carries out the reaction S-ubiquitinyl-[E2 ubiquitin-conjugating enzyme]-L-cysteine + [acceptor protein]-L-lysine = [E2 ubiquitin-conjugating enzyme]-L-cysteine + N(6)-ubiquitinyl-[acceptor protein]-L-lysine.. Its pathway is protein modification; protein ubiquitination. Functions as an E3 ubiquitin ligase. The chain is Putative U-box domain-containing protein 42 (PUB42) from Arabidopsis thaliana (Mouse-ear cress).